A 217-amino-acid chain; its full sequence is Putative N-acetylmuramoyl-L-alanine amidase (217 aa).

The 204-residue stretch at 3-206 folds into the MurNAc-LAA domain; sequence IAIDAGHGGQ…ISKSISIALK (204 aa).

Belongs to the N-acetylmuramoyl-L-alanine amidase 3 family.

Its subcellular location is the secreted. It catalyses the reaction Hydrolyzes the link between N-acetylmuramoyl residues and L-amino acid residues in certain cell-wall glycopeptides.. Its function is as follows. Cell-wall hydrolase involved in septum cleavage during cell division. This is Putative N-acetylmuramoyl-L-alanine amidase (amiB) from Buchnera aphidicola subsp. Baizongia pistaciae (strain Bp).